The chain runs to 429 residues: Enolase (429 aa).

Gln163 is a (2R)-2-phosphoglycerate binding site. Glu205 serves as the catalytic Proton donor. Asp242, Glu287, and Asp314 together coordinate Mg(2+). (2R)-2-phosphoglycerate is bound by residues Lys339, Arg368, Ser369, and Lys390. Lys339 serves as the catalytic Proton acceptor.

Belongs to the enolase family. Requires Mg(2+) as cofactor.

The protein resides in the cytoplasm. It localises to the secreted. The protein localises to the cell surface. The catalysed reaction is (2R)-2-phosphoglycerate = phosphoenolpyruvate + H2O. It participates in carbohydrate degradation; glycolysis; pyruvate from D-glyceraldehyde 3-phosphate: step 4/5. Catalyzes the reversible conversion of 2-phosphoglycerate (2-PG) into phosphoenolpyruvate (PEP). It is essential for the degradation of carbohydrates via glycolysis. This Cupriavidus taiwanensis (strain DSM 17343 / BCRC 17206 / CCUG 44338 / CIP 107171 / LMG 19424 / R1) (Ralstonia taiwanensis (strain LMG 19424)) protein is Enolase.